The following is a 124-amino-acid chain: Large ribosomal subunit protein bL12 (124 aa).

This sequence belongs to the bacterial ribosomal protein bL12 family. As to quaternary structure, homodimer. Part of the ribosomal stalk of the 50S ribosomal subunit. Forms a multimeric L10(L12)X complex, where L10 forms an elongated spine to which 2 to 4 L12 dimers bind in a sequential fashion. Binds GTP-bound translation factors.

In terms of biological role, forms part of the ribosomal stalk which helps the ribosome interact with GTP-bound translation factors. Is thus essential for accurate translation. This is Large ribosomal subunit protein bL12 from Burkholderia cenocepacia (strain ATCC BAA-245 / DSM 16553 / LMG 16656 / NCTC 13227 / J2315 / CF5610) (Burkholderia cepacia (strain J2315)).